A 279-amino-acid chain; its full sequence is MLQKPRGRGRPSTQADPERDWGGAGEEGPSTSRAAGGSSQGSRASLSAPTVGPRTQKQLELKVAELVQFLLIKDQKKIPIKRTDILKHVVGDYRDVYPNLLKLAAERLQYVFGYKLVELEPKSHSYILINMLEPVEADAEMRGDQGTPISGLLMIVLGLIFMKGNTITETEVWDFLRRLGVYPTKKHLIFGDPKKLITEDFVRQRYLEYRRIPHTDPVDYELQWGPRTNLETSKMKVLKFVAKVHNQDPKDWPTQYCEALADEESRARPATASAPATSS.

A disordered region spans residues 1–52 (MLQKPRGRGRPSTQADPERDWGGAGEEGPSTSRAAGGSSQGSRASLSAPTVG). The segment covering 30–48 (STSRAAGGSSQGSRASLSA) has biased composition (low complexity). Position 38 is a phosphoserine (serine 38). The interaction with NSMCE1 stretch occupies residues 52–279 (GPRTQKQLEL…ATASAPATSS (228 aa)). The MAGE domain occupies 59-259 (LELKVAELVQ…KDWPTQYCEA (201 aa)).

In terms of assembly, component of the SMC5-SMC6 complex which consists at least of SMC5, SMC6, NSMCE2, NSMCE1, NSMCE4A or EID3 and NSMCE3. NSMCE1, NSMCE4A or EID3 and NSMCE3 probably form a subcomplex that bridges the head domains of the SMC5:SMC6 heterodimer. Interacts with PJA1. Interacts with E2F1 (via C-terminus). Interacts with NGFR (via C-terminus). Interacts with NSMCE1. Interacts with NSMCE4. Interacts with SMC6. Interacts with EID3. In terms of tissue distribution, ubiquitous.

The protein resides in the cytoplasm. Its subcellular location is the nucleus. It localises to the chromosome. It is found in the telomere. Functionally, component of the SMC5-SMC6 complex, a complex involved in repair of DNA double-strand breaks by homologous recombination. The complex may promote sister chromatid homologous recombination by recruiting the SMC1-SMC3 cohesin complex to double-strand breaks. The complex is required for telomere maintenance via recombination in ALT (alternative lengthening of telomeres) cell lines and mediates sumoylation of shelterin complex (telosome) components which is proposed to lead to shelterin complex disassembly in ALT-associated PML bodies (APBs). In vitro enhances ubiquitin ligase activity of NSMCE1. Proposed to act through recruitment and/or stabilization of the Ubl-conjugating enzyme (E2) at the E3:substrate complex. May be a growth suppressor that facilitates the entry of the cell into cell cycle arrest. In Mus musculus (Mouse), this protein is Non-structural maintenance of chromosomes element 3 homolog (Nsmce3).